A 204-amino-acid polypeptide reads, in one-letter code: Tetraspanin-13 (204 aa).

Over 1–19 (MVCGGFSCSKNCLCALNLL) the chain is Cytoplasmic. A helical membrane pass occupies residues 20-40 (YTLVSLLLIGIAAWGIGFGLI). Residues 41–44 (SSLR) are Extracellular-facing. The chain crosses the membrane as a helical span at residues 45 to 65 (VVGVVIAVGIFLFLIALVGLI). Residues 66–72 (GAVKHHQ) lie on the Cytoplasmic side of the membrane. The helical transmembrane segment at 73-93 (VLLFFYMIILLLVFIVQFSVS) threads the bilayer. At 94-167 (CACLALNREQ…IGEYAGEVLR (74 aa)) the chain is on the extracellular side. Residues Asn-113 and Asn-137 are each glycosylated (N-linked (GlcNAc...) asparagine). Ser-143 is subject to Phosphoserine. A helical membrane pass occupies residues 168–188 (FVGGIGLFFSFTEILGVWLTY). The Cytoplasmic segment spans residues 189 to 204 (RYRNQKDPRANPSAFL).

Belongs to the tetraspanin (TM4SF) family.

The protein localises to the membrane. The chain is Tetraspanin-13 (Tspan13) from Rattus norvegicus (Rat).